Here is a 434-residue protein sequence, read N- to C-terminus: Cobyrinate a,c-diamide synthase (434 aa).

Residues 239–430 enclose the GATase cobBQ-type domain; that stretch reads KMAIAYDPAF…SHLHFSNFQL (192 aa). Cys320 (nucleophile) is an active-site residue.

It belongs to the CobB/CbiA family. Requires Mg(2+) as cofactor.

It catalyses the reaction cob(II)yrinate + 2 L-glutamine + 2 ATP + 2 H2O = cob(II)yrinate a,c diamide + 2 L-glutamate + 2 ADP + 2 phosphate + 2 H(+). The protein operates within cofactor biosynthesis; adenosylcobalamin biosynthesis; cob(II)yrinate a,c-diamide from sirohydrochlorin (anaerobic route): step 10/10. Its function is as follows. Catalyzes the ATP-dependent amidation of the two carboxylate groups at positions a and c of cobyrinate, using either L-glutamine or ammonia as the nitrogen source. The protein is Cobyrinate a,c-diamide synthase of Saccharolobus solfataricus (strain ATCC 35092 / DSM 1617 / JCM 11322 / P2) (Sulfolobus solfataricus).